The primary structure comprises 691 residues: Histone-lysine N-methyltransferase Set8 (691 aa).

The interval 1–29 is disordered; it reads MIMVRRRQRPAKEAASSSSGGASSGSGIP. A compositionally biased stretch (low complexity) spans 14–27; sequence AASSSSGGASSGSG. A phosphoserine mark is found at serine 195 and serine 250. Threonine 252 is modified (phosphothreonine). At serine 281 the chain carries Phosphoserine. Disordered regions lie at residues 341–363, 382–401, 407–437, and 464–516; these read TANT…HRIL, GSAD…TTTA, KSRR…QQQQ, and AEER…ATNG. Phosphothreonine is present on threonine 344. Residues serine 346, serine 383, serine 388, and serine 392 each carry the phosphoserine modification. Polar residues-rich tracts occupy residues 421 to 430 and 471 to 481; these read YQPQLQKPPS and NKAPATANSNK. Residues 555 to 676 form the SET domain; sequence DGLQVRHFMG…PGEELTYDYG (122 aa). Residues 565 to 567, tyrosine 610, and 637 to 638 each bind S-adenosyl-L-methionine; these read KGR and NH.

It belongs to the class V-like SAM-binding methyltransferase superfamily. Histone-lysine methyltransferase family. PR/SET subfamily.

The protein localises to the nucleus. The protein resides in the chromosome. The catalysed reaction is L-lysyl(20)-[histone H4] + S-adenosyl-L-methionine = N(6)-methyl-L-lysyl(20)-[histone H4] + S-adenosyl-L-homocysteine + H(+). Its function is as follows. Histone methyltransferase that specifically monomethylates 'Lys-20' of histone H4. H4 'Lys-20' monomethylation is enriched during mitosis and represents a specific tag for epigenetic transcriptional repression. Mainly functions in euchromatin regions, thereby playing a central role in the silencing of euchromatic genes. Required for cell proliferation, possibly by contributing to the maintenance of proper higher-order structure of DNA and chromosome condensation during mitosis. In Drosophila melanogaster (Fruit fly), this protein is Histone-lysine N-methyltransferase Set8.